Here is a 401-residue protein sequence, read N- to C-terminus: Beta-ketoadipyl-CoA thiolase (401 aa).

Cys-90 functions as the Acyl-thioester intermediate in the catalytic mechanism. Catalysis depends on proton acceptor residues His-357 and Cys-387.

It belongs to the thiolase-like superfamily. Thiolase family.

The enzyme catalyses succinyl-CoA + acetyl-CoA = 3-oxoadipyl-CoA + CoA. Its pathway is aromatic compound metabolism; beta-ketoadipate pathway; acetyl-CoA and succinyl-CoA from 3-oxoadipate: step 2/2. Functionally, catalyzes thiolytic cleavage of beta-ketoadipyl-CoA to succinyl-CoA and acetyl-CoA. This is Beta-ketoadipyl-CoA thiolase (pcaF) from Acinetobacter baylyi (strain ATCC 33305 / BD413 / ADP1).